Reading from the N-terminus, the 526-residue chain is GMP synthase [glutamine-hydrolyzing] (526 aa).

The 200-residue stretch at 9-208 folds into the Glutamine amidotransferase type-1 domain; the sequence is RILILDFGSQ…LVNICGCKQL (200 aa). Cysteine 86 serves as the catalytic Nucleophile. Residues histidine 182 and glutamate 184 contribute to the active site. Residues 209–401 form the GMPS ATP-PPase domain; that stretch reads WTPGRIIEDA…LGLPYDMVYR (193 aa). 236 to 242 is an ATP binding site; the sequence is SGGVDSS.

In terms of assembly, homodimer.

The enzyme catalyses XMP + L-glutamine + ATP + H2O = GMP + L-glutamate + AMP + diphosphate + 2 H(+). The protein operates within purine metabolism; GMP biosynthesis; GMP from XMP (L-Gln route): step 1/1. Catalyzes the synthesis of GMP from XMP. This Hahella chejuensis (strain KCTC 2396) protein is GMP synthase [glutamine-hydrolyzing].